A 160-amino-acid chain; its full sequence is Nucleotide-binding protein Bpet3698 (160 aa).

The protein belongs to the YajQ family.

In terms of biological role, nucleotide-binding protein. The protein is Nucleotide-binding protein Bpet3698 of Bordetella petrii (strain ATCC BAA-461 / DSM 12804 / CCUG 43448).